We begin with the raw amino-acid sequence, 110 residues long: U-scoloptoxin(16)-Er7a (110 aa).

Residues 1–26 form the signal peptide; sequence MTSTRKLSVSCLIVFMVSSLIAVSSG.

This sequence belongs to the scoloptoxin-16 family. Contains 4 disulfide bonds. As to expression, expressed by the venom gland.

The protein localises to the secreted. The protein is U-scoloptoxin(16)-Er7a of Ethmostigmus rubripes (Giant centipede).